Consider the following 160-residue polypeptide: Nucleotide-binding protein VC_1508 (160 aa).

It belongs to the YajQ family.

Its function is as follows. Nucleotide-binding protein. This is Nucleotide-binding protein VC_1508 from Vibrio cholerae serotype O1 (strain ATCC 39315 / El Tor Inaba N16961).